The following is a 480-amino-acid chain: Probable E3 ubiquitin protein ligase DRIPH (480 aa).

The RING-type zinc-finger motif lies at 16–57 (CPICTNPFKDATTISECLHTFCRSCIRNKFINERVNACPVCN). Disordered stretches follow at residues 93-133 (GPKT…EPAN), 167-193 (RGRK…PKIK), 241-261 (TPPD…ESVE), and 280-356 (VNQN…EMKV). Over residues 103-112 (SSKKKRKSRT) the composition is skewed to basic residues. Residues 113-133 (SLRVSSSRVSSSPDTPLEPAN) are compositionally biased toward low complexity. The span at 175–193 (KKIDSKPEPELPPKEPKIK) shows a compositional bias: basic and acidic residues. Residues 246–260 (VEPEISSDDDTEESV) are compositionally biased toward acidic residues. Residues 298–309 (GQKLKTNGAATS) are compositionally biased toward polar residues.

The catalysed reaction is S-ubiquitinyl-[E2 ubiquitin-conjugating enzyme]-L-cysteine + [acceptor protein]-L-lysine = [E2 ubiquitin-conjugating enzyme]-L-cysteine + N(6)-ubiquitinyl-[acceptor protein]-L-lysine.. It participates in protein modification; protein ubiquitination. In Arabidopsis thaliana (Mouse-ear cress), this protein is Probable E3 ubiquitin protein ligase DRIPH.